The chain runs to 222 residues: Ribosomal RNA small subunit methyltransferase G (222 aa).

S-adenosyl-L-methionine-binding positions include Gly-84, Phe-89, 141-142, and Arg-154; that span reads VE.

It belongs to the methyltransferase superfamily. RNA methyltransferase RsmG family.

Its subcellular location is the cytoplasm. The enzyme catalyses guanosine(527) in 16S rRNA + S-adenosyl-L-methionine = N(7)-methylguanosine(527) in 16S rRNA + S-adenosyl-L-homocysteine. Specifically methylates the N7 position of guanine in position 527 of 16S rRNA. The sequence is that of Ribosomal RNA small subunit methyltransferase G from Bradyrhizobium sp. (strain BTAi1 / ATCC BAA-1182).